The following is a 274-amino-acid chain: MQNITQSWFVQGMIKATTDAWLKGWDERNGGNLTLRLDDADIAPYHDNFHQQPRYIPLSQPMPLLANTPFIVTGSGKFFRNVQLDPAANLGIVKVDSDGAGYHILWGLTNEAVPTSELPAHFLSHCERIKATNGKDRVIMHCHATNLIALTYVLENDTAVFTRQLWEGSTECLVVFPDGVGILPWMVPGTDEIGQATAQEMQKHSLVLWPFHGVFGSGPTLDETFGLIDTAEKSAQVLVKVYSMGGMKQTISREELIALGKRFGVTPLASALAL.

Glutamate 117 is a catalytic residue. Residues histidine 141, histidine 143, and histidine 212 each coordinate Zn(2+).

It belongs to the aldolase class II family. RhaD subfamily. As to quaternary structure, homotetramer. Requires Zn(2+) as cofactor.

The protein localises to the cytoplasm. The catalysed reaction is L-rhamnulose 1-phosphate = (S)-lactaldehyde + dihydroxyacetone phosphate. The protein operates within carbohydrate degradation; L-rhamnose degradation; glycerone phosphate from L-rhamnose: step 3/3. In terms of biological role, catalyzes the reversible cleavage of L-rhamnulose-1-phosphate to dihydroxyacetone phosphate (DHAP) and L-lactaldehyde. This Escherichia coli (strain K12 / MC4100 / BW2952) protein is Rhamnulose-1-phosphate aldolase.